A 212-amino-acid polypeptide reads, in one-letter code: Pyridoxine/pyridoxamine 5'-phosphate oxidase (212 aa).

Residues arginine 8–tyrosine 11 and lysine 66 contribute to the substrate site. FMN contacts are provided by residues arginine 61 to lysine 66, phenylalanine 76 to threonine 77, arginine 82, lysine 83, and glutamine 105. Substrate-binding residues include tyrosine 123, arginine 127, and serine 131. Residues glutamine 140–serine 141 and tryptophan 184 each bind FMN. A substrate-binding site is contributed by arginine 190 to histidine 192. Arginine 194 serves as a coordination point for FMN.

This sequence belongs to the pyridoxamine 5'-phosphate oxidase family. In terms of assembly, homodimer. It depends on FMN as a cofactor.

The enzyme catalyses pyridoxamine 5'-phosphate + O2 + H2O = pyridoxal 5'-phosphate + H2O2 + NH4(+). It carries out the reaction pyridoxine 5'-phosphate + O2 = pyridoxal 5'-phosphate + H2O2. It participates in cofactor metabolism; pyridoxal 5'-phosphate salvage; pyridoxal 5'-phosphate from pyridoxamine 5'-phosphate: step 1/1. It functions in the pathway cofactor metabolism; pyridoxal 5'-phosphate salvage; pyridoxal 5'-phosphate from pyridoxine 5'-phosphate: step 1/1. Its function is as follows. Catalyzes the oxidation of either pyridoxine 5'-phosphate (PNP) or pyridoxamine 5'-phosphate (PMP) into pyridoxal 5'-phosphate (PLP). This Cupriavidus pinatubonensis (strain JMP 134 / LMG 1197) (Cupriavidus necator (strain JMP 134)) protein is Pyridoxine/pyridoxamine 5'-phosphate oxidase.